We begin with the raw amino-acid sequence, 265 residues long: DNA repair protein RecO (265 aa).

Belongs to the RecO family.

In terms of biological role, involved in DNA repair and RecF pathway recombination. This chain is DNA repair protein RecO, found in Mycobacterium ulcerans (strain Agy99).